The sequence spans 281 residues: MANYTAADIKTLREKSGAGMLDVKKALDEADGDAEKALEIIRVKGLKGVAKREGRSASEGLVAVKVTDAHDVAGQVGTMVELNAETDFVAKNATFVGLAERVLDAAVASAARDADALLAADAGGETVAEIVDGAAATLGEKLVLRRVARLDGEHVGVYLHRTSKDLPPQVGVMVATDAAAASVAEEIAMHVAAYSPAYLTREDVPEQLVADERRIAEETARNEGKPEQALTKIVEGRLNGFFKDQVLVDQAFARDPKKTVGQVVAETGGTLTGFARFRVGA.

Positions 86–89 (TDFV) are involved in Mg(2+) ion dislocation from EF-Tu.

It belongs to the EF-Ts family.

It is found in the cytoplasm. Functionally, associates with the EF-Tu.GDP complex and induces the exchange of GDP to GTP. It remains bound to the aminoacyl-tRNA.EF-Tu.GTP complex up to the GTP hydrolysis stage on the ribosome. The chain is Elongation factor Ts from Beutenbergia cavernae (strain ATCC BAA-8 / DSM 12333 / CCUG 43141 / JCM 11478 / NBRC 16432 / NCIMB 13614 / HKI 0122).